The following is a 689-amino-acid chain: Collagen alpha-2(IX) chain (689 aa).

The signal sequence occupies residues 1 to 23 (MAAATASPRSLLVLLQVVVLALA). Positions 26–518 (RGPPGERGPP…QPGRQGVEGR (493 aa)) are disordered. The tract at residues 27–163 (GPPGERGPPG…PGKPGRPGTI (137 aa)) is triple-helical region 4 (COL4). Positions 31–43 (ERGPPGPPGPPGV) are enriched in pro residues. The span at 44–56 (PGSDGIDGDNGPP) shows a compositional bias: low complexity. 2 stretches are compositionally biased toward pro residues: residues 106–127 (LPGPPGLPGPGFAGPPGPPGPV) and 144–157 (PDGPSGPPGPPGKP). Pro-160 is modified (4-hydroxyproline). The interval 164–180 (QGLEGSADFLCPTNCPP) is nonhelical region 4 (NC4). A glycan (O-linked (Xyl...) (glycosaminoglycan) serine) is linked at Ser-169. The segment at 181-519 (GMKGPPGLQG…PGRQGVEGRD (339 aa)) is triple-helical region 3 (COL3). 5-hydroxylysine is present on Lys-183. Residue Lys-183 is glycosylated (O-linked (Gal...) hydroxylysine). The segment covering 343-352 (GTKGGPGDQG) has biased composition (gly residues). Low complexity-rich tracts occupy residues 353 to 366 (EPGPQGLPGFSGPP) and 393 to 413 (RGPVGQPGPQGRQGPKGEQGP). The nonhelical region 3 (NC3) stretch occupies residues 520–549 (ATDQHIVDVALKMLQEQLAEVAVSAKREAL). Residues 550 to 632 (GAVGMMGPPG…PGLPGRPGQA (83 aa)) are triple-helical region 2 (COL2). The interval 554-663 (MMGPPGPPGP…LPGPVGLPGF (110 aa)) is disordered. Over residues 557 to 566 (PPGPPGPPGY) the composition is skewed to pro residues. Positions 599-611 (KRGEKGDPGEVGR) are enriched in basic and acidic residues. A nonhelical region 2 (NC2) region spans residues 633 to 634 (IN). The interval 635–664 (GKDGDRGSPGAPGEAGRPGLPGPVGLPGFC) is triple-helical region 1 (COL1). Residues 665 to 689 (EPAACLGASAYASARLTEPGSIKGP) form a nonhelical region 1 (NC1) region.

The protein belongs to the fibril-associated collagens with interrupted helices (FACIT) family. As to quaternary structure, heterotrimer of an alpha 1(IX), an alpha 2(IX) and an alpha 3(IX) chain. The chains are linked to each other by interchain disulfide bonds. Trimers are also cross-linked via hydroxylysines. Post-translationally, covalently linked to the telopeptides of type II collagen by lysine-derived cross-links. Prolines at the third position of the tripeptide repeating unit (G-X-Y) are hydroxylated in some or all of the chains.

The protein localises to the secreted. It is found in the extracellular space. It localises to the extracellular matrix. Functionally, structural component of hyaline cartilage and vitreous of the eye. The polypeptide is Collagen alpha-2(IX) chain (Homo sapiens (Human)).